We begin with the raw amino-acid sequence, 560 residues long: N-acetylglucosamine-6-sulfatase (560 aa).

A disordered region spans residues 1 to 25; that stretch reads MRLLSLAPDRPRRGGPRHLTSGSPA. A signal peptide spans 1-48; sequence MRLLSLAPDRPRRGGPRHLTSGSPALPPPPPLLLLLLLLGGCLGVSGA. Residues D63, D64, and C99 each contribute to the Ca(2+) site. C99 functions as the Nucleophile in the catalytic mechanism. C99 bears the 3-oxoalanine (Cys) mark. N-linked (GlcNAc...) asparagine glycosylation is found at N119, N125, N191, N206, N218, N287, and N325. Positions 334 and 335 each coordinate Ca(2+). 6 N-linked (GlcNAc...) asparagine glycosylation sites follow: N370, N395, N413, N430, N457, and N488. At S549 the chain carries Phosphoserine.

It belongs to the sulfatase family. Ca(2+) serves as cofactor. Post-translationally, the conversion to 3-oxoalanine (also known as C-formylglycine, FGly), of a serine or cysteine residue in prokaryotes and of a cysteine residue in eukaryotes, is critical for catalytic activity.

The protein localises to the lysosome. It carries out the reaction Hydrolysis of the 6-sulfate groups of the N-acetyl-D-glucosamine 6-sulfate units of heparan sulfate and keratan sulfate.. Its function is as follows. Hydrolyzes 6-sulfate groups in N-acetyl-d-glucosaminide units of heparin sulfate and keratan sulfate. In Bos taurus (Bovine), this protein is N-acetylglucosamine-6-sulfatase (GNS).